The sequence spans 305 residues: Olfactory receptor 4F5 (305 aa).

The Extracellular segment spans residues 1-18 (MVTEFIFLGLSDSQELQT). Residues 19–42 (FLFMLFFVFYGGIVFGNLLIVITV) traverse the membrane as a helical segment. The Cytoplasmic segment spans residues 43-50 (VSDSHLHS). A helical transmembrane segment spans residues 51–72 (PMYFLLANLSLIDLSLSSVTAP). Over 73-93 (KMITDFFSQRKVISFKGCLVQ) the chain is Extracellular. A disulfide bridge links cysteine 90 with cysteine 182. The helical transmembrane segment at 94 to 113 (IFLLHFFGGSEMVILIAMGF) threads the bilayer. The Cytoplasmic portion of the chain corresponds to 114–132 (DRYIAICKPLHYTTIMCGN). A helical membrane pass occupies residues 133–151 (ACVGIMAVTWGIGFLHSVS). At 152–188 (QLAFAVHLLFCGPNEVDSFYCDLPRVIKLACTDTYRL) the chain is on the extracellular side. The chain crosses the membrane as a helical span at residues 189-212 (DIMVIANSGVLTVCSFVLLIISYT). Residues 213 to 228 (IILMTIQHRPLDKSSK) lie on the Cytoplasmic side of the membrane. The helical transmembrane segment at 229–251 (ALSTLTAHITVVLLFFGPCVFIY) threads the bilayer. Residues 252-262 (AWPFPIKSLDK) are Extracellular-facing. The chain crosses the membrane as a helical span at residues 263–282 (FLAVFYSVITPLLNPIIYTL). Residues 283–305 (RNKDMKTAIRQLRKWDAHSSVKF) are Cytoplasmic-facing.

This sequence belongs to the G-protein coupled receptor 1 family.

The protein localises to the cell membrane. Odorant receptor. This is Olfactory receptor 4F5 (OR4F5) from Homo sapiens (Human).